The chain runs to 219 residues: 16S rRNA (adenine(1408)-N(1))-methyltransferase (219 aa).

S-adenosyl-L-methionine-binding positions include Gly-32, Asn-38, Asp-55, 87-88 (AE), 104-109 (LFPWGT), and 195-197 (SLW).

It belongs to the methyltransferase superfamily. Kanamycin-apramycin resistance family.

The catalysed reaction is adenosine(1408) in 16S rRNA + S-adenosyl-L-methionine = N(1)-methyladenosine(1408) in 16S rRNA + S-adenosyl-L-homocysteine + H(+). In terms of biological role, specifically methylates the N(1) position of adenine 1408 in 16S rRNA. Confers resistance to various aminoglycosides, including kanamycin, neomycin, apramycin, ribostamycin and gentamicin. Methylates only fully assembled 30S subunits. This is 16S rRNA (adenine(1408)-N(1))-methyltransferase (npmA) from Escherichia coli.